The sequence spans 511 residues: Bifunctional purine biosynthesis protein PurH (511 aa).

Residues 1-146 (MARLALLSVS…KNFAHTTVLT (146 aa)) form the MGS-like domain.

This sequence belongs to the PurH family.

The catalysed reaction is (6R)-10-formyltetrahydrofolate + 5-amino-1-(5-phospho-beta-D-ribosyl)imidazole-4-carboxamide = 5-formamido-1-(5-phospho-D-ribosyl)imidazole-4-carboxamide + (6S)-5,6,7,8-tetrahydrofolate. It catalyses the reaction IMP + H2O = 5-formamido-1-(5-phospho-D-ribosyl)imidazole-4-carboxamide. Its pathway is purine metabolism; IMP biosynthesis via de novo pathway; 5-formamido-1-(5-phospho-D-ribosyl)imidazole-4-carboxamide from 5-amino-1-(5-phospho-D-ribosyl)imidazole-4-carboxamide (10-formyl THF route): step 1/1. It functions in the pathway purine metabolism; IMP biosynthesis via de novo pathway; IMP from 5-formamido-1-(5-phospho-D-ribosyl)imidazole-4-carboxamide: step 1/1. In Synechocystis sp. (strain ATCC 27184 / PCC 6803 / Kazusa), this protein is Bifunctional purine biosynthesis protein PurH.